Consider the following 104-residue polypeptide: Nucleoid-associated protein Moth_0028 (104 aa).

This sequence belongs to the YbaB/EbfC family. In terms of assembly, homodimer.

The protein localises to the cytoplasm. The protein resides in the nucleoid. Its function is as follows. Binds to DNA and alters its conformation. May be involved in regulation of gene expression, nucleoid organization and DNA protection. This Moorella thermoacetica (strain ATCC 39073 / JCM 9320) protein is Nucleoid-associated protein Moth_0028.